Here is a 260-residue protein sequence, read N- to C-terminus: Eukaryotic translation initiation factor 3 subunit G-2 (260 aa).

In terms of domain architecture, RRM spans 180–258 (CAVRISNLSE…LILSVEWSKP (79 aa)).

This sequence belongs to the eIF-3 subunit G family. In terms of assembly, component of the eukaryotic translation initiation factor 3 (eIF-3) complex. The eIF-3 complex interacts with pix.

The protein resides in the cytoplasm. In terms of biological role, RNA-binding component of the eukaryotic translation initiation factor 3 (eIF-3) complex, which is involved in protein synthesis of a specialized repertoire of mRNAs and, together with other initiation factors, stimulates binding of mRNA and methionyl-tRNAi to the 40S ribosome. The eIF-3 complex specifically targets and initiates translation of a subset of mRNAs involved in cell proliferation. This subunit can bind 18S rRNA. This chain is Eukaryotic translation initiation factor 3 subunit G-2, found in Drosophila grimshawi (Hawaiian fruit fly).